The primary structure comprises 925 residues: Leucine--tRNA ligase (925 aa).

The short motif at 40–51 (PYPSGAGLHVGH) is the 'HIGH' region element. The short motif at 700–704 (KMSKS) is the 'KMSKS' region element. K703 lines the ATP pocket.

This sequence belongs to the class-I aminoacyl-tRNA synthetase family.

The protein resides in the cytoplasm. It carries out the reaction tRNA(Leu) + L-leucine + ATP = L-leucyl-tRNA(Leu) + AMP + diphosphate. The protein is Leucine--tRNA ligase of Porphyromonas gingivalis (strain ATCC 33277 / DSM 20709 / CIP 103683 / JCM 12257 / NCTC 11834 / 2561).